The sequence spans 307 residues: Aspartate carbamoyltransferase catalytic subunit (307 aa).

Carbamoyl phosphate contacts are provided by R54 and T55. Position 83 (K83) interacts with L-aspartate. Carbamoyl phosphate-binding residues include R104, H132, and Q135. L-aspartate-binding residues include R165 and R228. L267 and P268 together coordinate carbamoyl phosphate.

This sequence belongs to the aspartate/ornithine carbamoyltransferase superfamily. ATCase family. In terms of assembly, heterododecamer (2C3:3R2) of six catalytic PyrB chains organized as two trimers (C3), and six regulatory PyrI chains organized as three dimers (R2).

The catalysed reaction is carbamoyl phosphate + L-aspartate = N-carbamoyl-L-aspartate + phosphate + H(+). It participates in pyrimidine metabolism; UMP biosynthesis via de novo pathway; (S)-dihydroorotate from bicarbonate: step 2/3. Its function is as follows. Catalyzes the condensation of carbamoyl phosphate and aspartate to form carbamoyl aspartate and inorganic phosphate, the committed step in the de novo pyrimidine nucleotide biosynthesis pathway. The chain is Aspartate carbamoyltransferase catalytic subunit from Clostridium botulinum (strain Langeland / NCTC 10281 / Type F).